A 335-amino-acid chain; its full sequence is Acetyl-coenzyme A carboxylase carboxyl transferase subunit alpha (335 aa).

Residues Q40–E294 form the CoA carboxyltransferase C-terminal domain.

Belongs to the AccA family. In terms of assembly, acetyl-CoA carboxylase is a heterohexamer composed of biotin carboxyl carrier protein (AccB), biotin carboxylase (AccC) and two subunits each of ACCase subunit alpha (AccA) and ACCase subunit beta (AccD).

Its subcellular location is the cytoplasm. The enzyme catalyses N(6)-carboxybiotinyl-L-lysyl-[protein] + acetyl-CoA = N(6)-biotinyl-L-lysyl-[protein] + malonyl-CoA. Its pathway is lipid metabolism; malonyl-CoA biosynthesis; malonyl-CoA from acetyl-CoA: step 1/1. Functionally, component of the acetyl coenzyme A carboxylase (ACC) complex. First, biotin carboxylase catalyzes the carboxylation of biotin on its carrier protein (BCCP) and then the CO(2) group is transferred by the carboxyltransferase to acetyl-CoA to form malonyl-CoA. The chain is Acetyl-coenzyme A carboxylase carboxyl transferase subunit alpha from Prochlorococcus marinus (strain MIT 9515).